A 98-amino-acid chain; its full sequence is Cystatin-A (98 aa).

Met1 carries the post-translational modification N-acetylmethionine. The short motif at 46-50 is the Secondary area of contact element; sequence QVVAG.

The protein belongs to the cystatin family.

The protein resides in the cytoplasm. Its function is as follows. This is an intracellular thiol proteinase inhibitor. This is Cystatin-A (CSTA) from Bos taurus (Bovine).